Consider the following 52-residue polypeptide: Alpha-crystallin B chain (52 aa).

The protein belongs to the small heat shock protein (HSP20) family. In terms of assembly, homodimer. Aggregates with homologous proteins, including alpha-A-crystallin and the small heat shock protein HSPB1, to form large heteromeric complexes.

In terms of biological role, may contribute to the transparency and refractive index of the lens. The chain is Alpha-crystallin B chain (CRYAB) from Turdus merula (Common blackbird).